Reading from the N-terminus, the 218-residue chain is Histone H1 (218 aa).

2 stretches are compositionally biased toward low complexity: residues 1–19 and 27–39; these read MSETAPVAAPAVSAPGAKA and AAGGSKARKPAGP. Disordered stretches follow at residues 1–41 and 89–218; these read MSET…GPSV and VGKG…PKKK. N-acetylserine is present on Ser-2. One can recognise an H15 domain in the interval 37–110; it reads AGPSVTELIT…GASGSFKLNK (74 aa). 4 stretches are compositionally biased toward basic residues: residues 119–133, 141–158, 166–184, and 191–218; these read ATKKKPAAKPKKPAA, KKPKKAAAVKKSPKKAKK, KAAKSPKKAAKAGRPKKAA, and KAVKPKAAKPKAAKPKAAKAKKAAPKKK.

It belongs to the histone H1/H5 family.

It is found in the nucleus. Its subcellular location is the chromosome. In terms of biological role, histones H1 are necessary for the condensation of nucleosome chains into higher-order structures. This chain is Histone H1, found in Anas platyrhynchos (Mallard).